Consider the following 168-residue polypeptide: Protein yop-1 (168 aa).

Residues 1–35 (MSSPQDRAQQYIGQLDKELSKYPTLNNLEKTTGVP) are Cytoplasmic-facing. Residues 36 to 55 (KAYAVIGLVALYFFLIIFNL) form a helical membrane-spanning segment. Position 56 (Gly-56) is a topological domain, lumenal. A helical membrane pass occupies residues 57-76 (GQLLTNLAGFVLPGYYSLNA). Residues 77 to 86 (LFTASKQDDT) are Cytoplasmic-facing. A helical transmembrane segment spans residues 87–103 (QWLTYWVVFSLFTVIES). At 104-105 (LI) the chain is on the lumenal side. A helical membrane pass occupies residues 106–124 (SVVYWFPFYFTFKFVFLLW). Over 125-168 (LSLPTFKGAETIFRSFLAPTLGRYFQNGSTASGLRAKADAVHTD) the chain is Cytoplasmic.

This sequence belongs to the DP1 family. As to quaternary structure, oligomer.

It is found in the endoplasmic reticulum membrane. The protein localises to the golgi apparatus membrane. In terms of biological role, required to generate and maintain the structure of the tubular endoplasmic reticulum network and the vacuole. Induces high curvature in membranes and causes membrane tubule formation. Involved in membrane/vesicle trafficking. The protein is Protein yop-1 (yop-1) of Neurospora crassa (strain ATCC 24698 / 74-OR23-1A / CBS 708.71 / DSM 1257 / FGSC 987).